We begin with the raw amino-acid sequence, 216 residues long: 3-isopropylmalate dehydratase small subunit (216 aa).

The protein belongs to the LeuD family. LeuD type 1 subfamily. As to quaternary structure, heterodimer of LeuC and LeuD.

It carries out the reaction (2R,3S)-3-isopropylmalate = (2S)-2-isopropylmalate. It participates in amino-acid biosynthesis; L-leucine biosynthesis; L-leucine from 3-methyl-2-oxobutanoate: step 2/4. In terms of biological role, catalyzes the isomerization between 2-isopropylmalate and 3-isopropylmalate, via the formation of 2-isopropylmaleate. This Polaromonas sp. (strain JS666 / ATCC BAA-500) protein is 3-isopropylmalate dehydratase small subunit.